We begin with the raw amino-acid sequence, 267 residues long: MSDILQKILAVKADEVAAARKKRDLPSLRAEAESLRTEPGLAPRGFERALREKIAAGQAGVIAEVKKASPSKGVLREHFVPEAIAESYASHGAACLSVLTDVNFFQGHADYLKRARGACPLPALRKDFMVDLYQVYEARTWGADCILLIVAALDPGLMAELEACALELGMDVLVEVHGDDELDAALRLKTPLLGVNNRNLRTFEVSLDNTLDLLPHMPADKLVVTESGILGQADVKRMRDANVHAFLVGEAFMRAPDPGVELARLFA.

Belongs to the TrpC family.

The enzyme catalyses 1-(2-carboxyphenylamino)-1-deoxy-D-ribulose 5-phosphate + H(+) = (1S,2R)-1-C-(indol-3-yl)glycerol 3-phosphate + CO2 + H2O. It functions in the pathway amino-acid biosynthesis; L-tryptophan biosynthesis; L-tryptophan from chorismate: step 4/5. This Cupriavidus necator (strain ATCC 17699 / DSM 428 / KCTC 22496 / NCIMB 10442 / H16 / Stanier 337) (Ralstonia eutropha) protein is Indole-3-glycerol phosphate synthase.